The chain runs to 297 residues: Transmembrane protein 178A (297 aa).

The N-terminal stretch at 1 to 25 (MEPRALVTALSLGLSLCSLGLLVTA) is a signal peptide. Residues 26–179 (IFTDHWYETD…LLHLRRITAG (154 aa)) are Extracellular-facing. Residues 41 to 57 (ESCERSRAGADPPDQKN) show a composition bias toward basic and acidic residues. Residues 41–86 (ESCERSRAGADPPDQKNRLMPLSHLPLRDSPPLGRRLLPGGPGRSD) are disordered. The span at 68-79 (RDSPPLGRRLLP) shows a compositional bias: low complexity. A glycan (N-linked (GlcNAc...) asparagine) is linked at N158. Residues 180–200 (FLGMAVAVLLCGCIVATVSFF) form a helical membrane-spanning segment. Residues 201–208 (WEESLTQH) are Cytoplasmic-facing. The chain crosses the membrane as a helical span at residues 209-229 (VAGLLFLMTGIFCTISLCTYA). Topologically, residues 230 to 257 (ASVSYDLNRVPKLIYSLPHDVEHGYSWS) are extracellular. The helical transmembrane segment at 258–278 (IFCAWCSLGFIVAAGGLCIAY) threads the bilayer. Over 279–297 (PFISRTKIAHLKSGRDSTV) the chain is Cytoplasmic.

This sequence belongs to the TMEM178 family. As to quaternary structure, interacts with STIM1. Highly expressed in the bone and its expression increases during osteoclastogenesis.

It localises to the endoplasmic reticulum membrane. Acts as a negative regulator of osteoclast differentiation in basal and inflammatory conditions by regulating TNFSF11-induced Ca (2+) fluxes, thereby controlling the induction of NFATC1. The sequence is that of Transmembrane protein 178A (Tmem178a) from Mus musculus (Mouse).